Consider the following 54-residue polypeptide: Ovomucoid (54 aa).

Residues 4-54 form the Kazal-like domain; sequence VDCSGYPQSACPQDYVPFCGSDNKTYSNKCNFCNAVADSNGTLTLSHFGKC. Intrachain disulfides connect cysteine 6-cysteine 36, cysteine 14-cysteine 33, and cysteine 22-cysteine 54. Asparagine 43 carries an N-linked (GlcNAc...) asparagine glycan.

Its subcellular location is the secreted. The protein is Ovomucoid of Gallirallus australis (Weka).